Consider the following 130-residue polypeptide: Ribosome-binding factor A (130 aa).

This sequence belongs to the RbfA family. Monomer. Binds 30S ribosomal subunits, but not 50S ribosomal subunits or 70S ribosomes.

It localises to the cytoplasm. One of several proteins that assist in the late maturation steps of the functional core of the 30S ribosomal subunit. Associates with free 30S ribosomal subunits (but not with 30S subunits that are part of 70S ribosomes or polysomes). Required for efficient processing of 16S rRNA. May interact with the 5'-terminal helix region of 16S rRNA. The chain is Ribosome-binding factor A from Prochlorococcus marinus (strain AS9601).